A 312-amino-acid polypeptide reads, in one-letter code: Malate dehydrogenase (312 aa).

NAD(+)-binding positions include 7–13 (GAAGGIG) and aspartate 34. Residues arginine 81 and arginine 87 each contribute to the substrate site. NAD(+) is bound by residues asparagine 94 and 117 to 119 (ITN). Substrate contacts are provided by asparagine 119 and arginine 153. Histidine 177 (proton acceptor) is an active-site residue. Methionine 227 serves as a coordination point for NAD(+).

Belongs to the LDH/MDH superfamily. MDH type 1 family. In terms of assembly, homodimer.

It carries out the reaction (S)-malate + NAD(+) = oxaloacetate + NADH + H(+). In terms of biological role, catalyzes the reversible oxidation of malate to oxaloacetate. This chain is Malate dehydrogenase, found in Citrobacter koseri (strain ATCC BAA-895 / CDC 4225-83 / SGSC4696).